We begin with the raw amino-acid sequence, 82 residues long: P2Y purinoceptor 2 (82 aa).

The chain crosses the membrane as a helical span at residues 1-25 (LPLSYGVVCVLGLCLNVVALYIFLC). The Cytoplasmic portion of the chain corresponds to 26-35 (RLKTWNASTT). Residues 36 to 56 (YMFHLAVSDSLYAASLPLLVY) form a helical membrane-spanning segment. At 57-75 (YYAQGDHWPFSTVLCKLVR) the chain is on the extracellular side. The helical transmembrane segment at 76-82 (FLFYTNL) threads the bilayer.

It belongs to the G-protein coupled receptor 1 family. Expressed in brain, heart, stria vascularis and vestibular labyrinth.

It is found in the cell membrane. Its function is as follows. Receptor for ATP and UTP coupled to G-proteins that activate a phosphatidylinositol-calcium second messenger system. Not activated by UDP. The polypeptide is P2Y purinoceptor 2 (P2RY2) (Meriones unguiculatus (Mongolian jird)).